A 400-amino-acid polypeptide reads, in one-letter code: Acetate kinase (400 aa).

Asn10 serves as a coordination point for Mg(2+). Residue Lys17 coordinates ATP. Residue Arg91 participates in substrate binding. Asp150 (proton donor/acceptor) is an active-site residue. ATP-binding positions include 210–214 (HLGNG), 285–287 (DCR), and 333–337 (GIGEN). Mg(2+) is bound at residue Glu387.

Belongs to the acetokinase family. As to quaternary structure, homodimer. The cofactor is Mg(2+). Requires Mn(2+) as cofactor.

It localises to the cytoplasm. The enzyme catalyses acetate + ATP = acetyl phosphate + ADP. Its pathway is metabolic intermediate biosynthesis; acetyl-CoA biosynthesis; acetyl-CoA from acetate: step 1/2. Functionally, catalyzes the formation of acetyl phosphate from acetate and ATP. Can also catalyze the reverse reaction. The protein is Acetate kinase of Yersinia pseudotuberculosis serotype I (strain IP32953).